Consider the following 204-residue polypeptide: Protein DESIGUAL 4 (204 aa).

4 helical membrane-spanning segments follow: residues 13 to 33 (IITV…VAGF), 60 to 80 (FVLG…ANVI), 107 to 127 (CLFL…NGIW), and 143 to 163 (VFSI…IYYI). The disordered stretch occupies residues 177 to 204 (KPNKTKPSELKPIPTEPNEAEPNSTPNP). N179 carries N-linked (GlcNAc...) asparagine glycosylation.

Belongs to the DESIGUAL family. Only expressed in inflorescences.

The protein resides in the endoplasmic reticulum membrane. The protein is Protein DESIGUAL 4 of Arabidopsis thaliana (Mouse-ear cress).